The sequence spans 189 residues: MSDKIFHNLSGKTLVATPHVITKGIYHKSLIYMLSHTEEGAIGLIFNRLVNHIDLKSFFKIKNDEITNPVMVPIYLGGPVEHEKGFFLHSSDYNKNLLLDFHNDLAVSSNLEISEDIAFGKGPKNSLFIVGYTAWKSGQLEEELEKNLWLVMDCNKEFIFADNPESKWHNALKHLGIDEIHFSSQIGNA.

The protein belongs to the UPF0301 (AlgH) family.

This is UPF0301 protein A1E_00140 from Rickettsia canadensis (strain McKiel).